Consider the following 865-residue polypeptide: Leucine--tRNA ligase (865 aa).

Positions 58-68 match the 'HIGH' region motif; that stretch reads PYPSGNLHMGH. A 'KMSKS' region motif is present at residues 629 to 633; sequence KMSKS. An ATP-binding site is contributed by K632.

The protein belongs to the class-I aminoacyl-tRNA synthetase family.

The protein localises to the cytoplasm. The enzyme catalyses tRNA(Leu) + L-leucine + ATP = L-leucyl-tRNA(Leu) + AMP + diphosphate. The sequence is that of Leucine--tRNA ligase from Synechococcus elongatus (strain ATCC 33912 / PCC 7942 / FACHB-805) (Anacystis nidulans R2).